Consider the following 314-residue polypeptide: BTB/POZ domain-containing protein KCTD17 (314 aa).

The 71-residue stretch at 24-94 (KWVRLNVGGT…LRHGKLVLDK (71 aa)) folds into the BTB domain. A disordered region spans residues 190–268 (STPNGLSSES…PAGGSRPHPL (79 aa)). The stretch at 196-239 (SSESSRKTKSTEEQLEEQQQQEEEVEEVEVEQVQVEADAQEKAQ) forms a coiled coil. The span at 208–225 (EQLEEQQQQEEEVEEVEV) shows a compositional bias: acidic residues.

As to quaternary structure, homopentamer; forms a closed pentamer. Interacts with CUL3; interaction is direct and forms a 5:5 heterodecamer. Interacts with TCHP. Interacts with CUL3, as part of the BCR(KCTD17) E3 ubiquitin ligase complex, at least composed of CUL3, KCTD17 and RBX1. As to expression, highly expressed in brain. Highest expression is observed in the putamen and the thalamus.

The protein localises to the cytoplasm. Substrate-adapter for CUL3-RING ubiquitin ligase complexes which mediates the ubiquitination and subsequent proteasomal degradation of TCHP, a protein involved in ciliogenesis down-regulation. Thereby, positively regulates ciliogenesis, playing a crucial role in the initial steps of axoneme extension. May also play a role in endoplasmic reticulum calcium ion homeostasis. This Homo sapiens (Human) protein is BTB/POZ domain-containing protein KCTD17.